A 384-amino-acid polypeptide reads, in one-letter code: Queuine tRNA-ribosyltransferase (384 aa).

Asp-92 functions as the Proton acceptor in the catalytic mechanism. Substrate-binding positions include 92–96 (DSGGF), Asp-146, Gln-190, and Gly-217. Positions 248–254 (GVGRPED) are RNA binding. The Nucleophile role is filled by Asp-267. Positions 272-276 (TRHAR) are RNA binding; important for wobble base 34 recognition. The Zn(2+) site is built by Cys-305, Cys-307, Cys-310, and His-337.

Belongs to the queuine tRNA-ribosyltransferase family. In terms of assembly, homodimer. Within each dimer, one monomer is responsible for RNA recognition and catalysis, while the other monomer binds to the replacement base PreQ1. Zn(2+) is required as a cofactor.

The catalysed reaction is 7-aminomethyl-7-carbaguanine + guanosine(34) in tRNA = 7-aminomethyl-7-carbaguanosine(34) in tRNA + guanine. It participates in tRNA modification; tRNA-queuosine biosynthesis. In terms of biological role, catalyzes the base-exchange of a guanine (G) residue with the queuine precursor 7-aminomethyl-7-deazaguanine (PreQ1) at position 34 (anticodon wobble position) in tRNAs with GU(N) anticodons (tRNA-Asp, -Asn, -His and -Tyr). Catalysis occurs through a double-displacement mechanism. The nucleophile active site attacks the C1' of nucleotide 34 to detach the guanine base from the RNA, forming a covalent enzyme-RNA intermediate. The proton acceptor active site deprotonates the incoming PreQ1, allowing a nucleophilic attack on the C1' of the ribose to form the product. After dissociation, two additional enzymatic reactions on the tRNA convert PreQ1 to queuine (Q), resulting in the hypermodified nucleoside queuosine (7-(((4,5-cis-dihydroxy-2-cyclopenten-1-yl)amino)methyl)-7-deazaguanosine). The protein is Queuine tRNA-ribosyltransferase of Xylella fastidiosa (strain M12).